Reading from the N-terminus, the 877-residue chain is AP-5 complex subunit beta-1 (877 aa).

Probably part of the adaptor protein complex 5 (AP-5), a tetramer composed of AP5B1, AP5M1, AP5S1 and AP5Z1. Interacts with ZFYVE26 and SPG11.

As part of AP-5, a probable fifth adaptor protein complex, it may be involved in endosomal transport. This chain is AP-5 complex subunit beta-1 (AP5B1), found in Bos taurus (Bovine).